We begin with the raw amino-acid sequence, 216 residues long: GTP cyclohydrolase-2 (216 aa).

51-55 (RIHSE) is a GTP binding site. Zn(2+) contacts are provided by Cys-56, Cys-67, and Cys-69. Residues Gln-72, 94–96 (EGR), and Thr-116 contribute to the GTP site. The active-site Proton acceptor is Asp-128. The active-site Nucleophile is Arg-130. GTP is bound by residues Thr-151 and Lys-156.

Belongs to the GTP cyclohydrolase II family. The cofactor is Zn(2+).

The enzyme catalyses GTP + 4 H2O = 2,5-diamino-6-hydroxy-4-(5-phosphoribosylamino)-pyrimidine + formate + 2 phosphate + 3 H(+). It functions in the pathway cofactor biosynthesis; riboflavin biosynthesis; 5-amino-6-(D-ribitylamino)uracil from GTP: step 1/4. In terms of biological role, catalyzes the conversion of GTP to 2,5-diamino-6-ribosylamino-4(3H)-pyrimidinone 5'-phosphate (DARP), formate and pyrophosphate. This chain is GTP cyclohydrolase-2, found in Haemophilus influenzae (strain 86-028NP).